The primary structure comprises 74 residues: Exodeoxyribonuclease 7 small subunit (74 aa).

Belongs to the XseB family. In terms of assembly, heterooligomer composed of large and small subunits.

The protein resides in the cytoplasm. The enzyme catalyses Exonucleolytic cleavage in either 5'- to 3'- or 3'- to 5'-direction to yield nucleoside 5'-phosphates.. Its function is as follows. Bidirectionally degrades single-stranded DNA into large acid-insoluble oligonucleotides, which are then degraded further into small acid-soluble oligonucleotides. The chain is Exodeoxyribonuclease 7 small subunit from Glaesserella parasuis serovar 5 (strain SH0165) (Haemophilus parasuis).